Here is a 170-residue protein sequence, read N- to C-terminus: Ureidoglycolate lyase (170 aa).

The protein belongs to the ureidoglycolate lyase family. Homodimer. Ni(2+) serves as cofactor.

The enzyme catalyses (S)-ureidoglycolate = urea + glyoxylate. Its pathway is nitrogen metabolism; (S)-allantoin degradation. Catalyzes the catabolism of the allantoin degradation intermediate (S)-ureidoglycolate, generating urea and glyoxylate. Involved in the utilization of allantoin as nitrogen source. This chain is Ureidoglycolate lyase, found in Burkholderia mallei (strain NCTC 10247).